Here is a 247-residue protein sequence, read N- to C-terminus: Ribosomal RNA small subunit methyltransferase G (247 aa).

S-adenosyl-L-methionine is bound by residues Gly-84, Phe-89, 136 to 137 (AE), and Arg-155.

Belongs to the methyltransferase superfamily. RNA methyltransferase RsmG family.

It is found in the cytoplasm. Its function is as follows. Specifically methylates the N7 position of a guanine in 16S rRNA. The chain is Ribosomal RNA small subunit methyltransferase G from Prochlorococcus marinus (strain MIT 9303).